The primary structure comprises 269 residues: Tryptophan synthase alpha chain (269 aa).

Residues Glu41 and Asp52 each act as proton acceptor in the active site.

It belongs to the TrpA family. Tetramer of two alpha and two beta chains.

It carries out the reaction (1S,2R)-1-C-(indol-3-yl)glycerol 3-phosphate + L-serine = D-glyceraldehyde 3-phosphate + L-tryptophan + H2O. The protein operates within amino-acid biosynthesis; L-tryptophan biosynthesis; L-tryptophan from chorismate: step 5/5. The alpha subunit is responsible for the aldol cleavage of indoleglycerol phosphate to indole and glyceraldehyde 3-phosphate. The chain is Tryptophan synthase alpha chain from Geobacillus stearothermophilus (Bacillus stearothermophilus).